The sequence spans 306 residues: Aquaporin-1 (306 aa).

Over residues 1 to 23 the composition is skewed to polar residues; sequence MASTHSSLTTVQNNANNKSNRTL. Positions 1–24 are disordered; that stretch reads MASTHSSLTTVQNNANNKSNRTLN. The Cytoplasmic portion of the chain corresponds to 1 to 59; sequence MASTHSSLTTVQNNANNKSNRTLNTERRLSMESSVFTLYNKAADELDTSQRSAFQACHR. The helical transmembrane segment at 60 to 80 threads the bilayer; the sequence is EFLAEFIGTVILVLLTCGFCA. Residues 81-92 are Extracellular-facing; the sequence is EQTLHIEESKSW. The helical transmembrane segment at 93-113 threads the bilayer; the sequence is LTSSFGSGLSVLIGICVSGHV. Residues 114-145 lie on the Cytoplasmic side of the membrane; the sequence is SGAHLNPAVTIAFCIFSGFPIRKVPSYITAQL. The short motif at 119–121 is the NPA 1 element; the sequence is NPA. The chain crosses the membrane as a helical span at residues 146 to 166; it reads LGAFAGAALLYIIIEPAIVQF. The Extracellular portion of the chain corresponds to 167–192; sequence DGGQRYILGEKSTAGIFGTYPPLYVG. The chain crosses the membrane as a helical span at residues 193 to 213; the sequence is IGSAIASEIMGTAMLLLVIMV. The Cytoplasmic segment spans residues 214 to 226; it reads TGHPNNLPYKSAQ. Residues 227 to 247 traverse the membrane as a helical segment; the sequence is GAMIALGITTISLCIGYTSGF. Residues 248–278 are Extracellular-facing; it reads SLNPARDFGPRLFTAIAGWGFDVFKVYHYYA. The short motif at 250–252 is the NPA 2 element; the sequence is NPA. A helical membrane pass occupies residues 279–299; that stretch reads LVPMFAPILGGLVGLMLMMPF. Over 300-306 the chain is Cytoplasmic; it reads SFLSVRA.

Belongs to the MIP/aquaporin (TC 1.A.8) family.

Its subcellular location is the cell membrane. It catalyses the reaction H2O(in) = H2O(out). Water channel required to facilitate the transport of water across membranes. Contributes to water uptake of spores during the early stages of spore germination. Aquaporins AQP1 and AQP2 act as extracellular pH sensors and enable the spores to hydrate under favorable conditions and to commence germination. Wounded vegetables and fruit present acidic pH, so the optimal pH range for germination is adapted to the relevant host pH. In Rhizopus delemar (strain RA 99-880 / ATCC MYA-4621 / FGSC 9543 / NRRL 43880) (Mucormycosis agent), this protein is Aquaporin-1.